The sequence spans 312 residues: MPGIAYLGPEGTFTEAALRALQAHGLIPSTAPDAAGADEVTPIAADSTSAALAAVRSGDADFACVPIENSIDGSVIPTLDSLADGAALQIYAELTLDVSFTIAVRPGTAAADVRTVAAYPVAAAQVRRWLAAHLPEAEVVPANSNAAAAQDVAAGRADAGVSTALATQRYGLEALAADVVDEPNARTRFVLVGRPGPPPKCTGADRTSVVLQLDNVPGALVSAMTELAVRDIDLTRIESRPTRTGLGTYKFFLDFVGHIEDPPVAEALRALHRRCADVRYLGSWPTGDVVGAAPPPMDESASWLEGLREGRP.

The Prephenate dehydratase domain maps to 3–194; sequence GIAYLGPEGT…ARTRFVLVGR (192 aa). The ACT domain occupies 208-285; that stretch reads SVVLQLDNVP…ADVRYLGSWP (78 aa). Residues 291 to 312 form a disordered region; sequence GAAPPPMDESASWLEGLREGRP.

In terms of assembly, homodimer.

The catalysed reaction is prephenate + H(+) = 3-phenylpyruvate + CO2 + H2O. The protein operates within amino-acid biosynthesis; L-phenylalanine biosynthesis; phenylpyruvate from prephenate: step 1/1. The sequence is that of Prephenate dehydratase (pheA) from Mycolicibacterium vanbaalenii (strain DSM 7251 / JCM 13017 / BCRC 16820 / KCTC 9966 / NRRL B-24157 / PYR-1) (Mycobacterium vanbaalenii).